We begin with the raw amino-acid sequence, 397 residues long: Glia-derived nexin (397 aa).

The first 19 residues, 1–19 (MNWHFPFFILTTVTLSSVY), serve as a signal peptide directing secretion. An N-linked (GlcNAc...) asparagine glycan is attached at Asn159.

The protein belongs to the serpin family.

The protein resides in the secreted. It is found in the extracellular space. Serine protease inhibitor with activity toward thrombin, trypsin, and urokinase. Promotes neurite extension by inhibiting thrombin. Binds heparin. The sequence is that of Glia-derived nexin (Serpine2) from Rattus norvegicus (Rat).